A 177-amino-acid chain; its full sequence is Large ribosomal subunit protein uL6 (177 aa).

This sequence belongs to the universal ribosomal protein uL6 family. In terms of assembly, part of the 50S ribosomal subunit.

This protein binds to the 23S rRNA, and is important in its secondary structure. It is located near the subunit interface in the base of the L7/L12 stalk, and near the tRNA binding site of the peptidyltransferase center. The sequence is that of Large ribosomal subunit protein uL6 from Natronomonas pharaonis (strain ATCC 35678 / DSM 2160 / CIP 103997 / JCM 8858 / NBRC 14720 / NCIMB 2260 / Gabara) (Halobacterium pharaonis).